The primary structure comprises 568 residues: Mannitol 2-dehydrogenase (568 aa).

109–120 serves as a coordination point for NAD(+); it reads IVHVGVGGFHRA.

Belongs to the mannitol dehydrogenase family. As to quaternary structure, monomer.

It carries out the reaction D-mannitol + NAD(+) = D-fructose + NADH + H(+). Its function is as follows. Catalyzes the NAD(H)-dependent interconversion of D-fructose and D-mannitol in the mannitol metabolic pathway. This is Mannitol 2-dehydrogenase from Phaeosphaeria nodorum (strain SN15 / ATCC MYA-4574 / FGSC 10173) (Glume blotch fungus).